A 180-amino-acid chain; its full sequence is Small ribosomal subunit protein eS10y (180 aa).

Positions 92 to 180 are disordered; sequence LKKQQKPLGR…GGGAAGSDLP (89 aa). Positions 108 to 128 are enriched in basic and acidic residues; sequence DRPRGPPRGDGERRFGDRDGY. A compositionally biased stretch (gly residues) spans 152–180; sequence FRGGAGGARQGFGRGAGGFGGGAAGSDLP.

Belongs to the eukaryotic ribosomal protein eS10 family.

The protein localises to the cytoplasm. This Arabidopsis thaliana (Mouse-ear cress) protein is Small ribosomal subunit protein eS10y (RPS10B).